A 396-amino-acid polypeptide reads, in one-letter code: Flavohemoprotein (396 aa).

Residues 1–136 form the Globin domain; the sequence is MLDAQTIATV…LANVFIHREA (136 aa). A heme b-binding site is contributed by histidine 85. Catalysis depends on charge relay system residues tyrosine 95 and glutamate 135. A reductase region spans residues 147-396; the sequence is GGWEGTRPFR…YECFGPHKVL (250 aa). One can recognise an FAD-binding FR-type domain in the interval 150 to 255; sequence EGTRPFRIVA…AAPAGDFFMN (106 aa). FAD-binding positions include tyrosine 188 and 204-207; that span reads RQYS. 268–273 is a binding site for NADP(+); it reads GVGQTP. Position 389–392 (389–392) interacts with FAD; that stretch reads CFGP.

The protein belongs to the globin family. Two-domain flavohemoproteins subfamily. In the C-terminal section; belongs to the flavoprotein pyridine nucleotide cytochrome reductase family. Requires heme b as cofactor. It depends on FAD as a cofactor.

The catalysed reaction is 2 nitric oxide + NADPH + 2 O2 = 2 nitrate + NADP(+) + H(+). The enzyme catalyses 2 nitric oxide + NADH + 2 O2 = 2 nitrate + NAD(+) + H(+). Its function is as follows. Is involved in NO detoxification in an aerobic process, termed nitric oxide dioxygenase (NOD) reaction that utilizes O(2) and NAD(P)H to convert NO to nitrate, which protects the bacterium from various noxious nitrogen compounds. Therefore, plays a central role in the inducible response to nitrosative stress. This Salmonella typhi protein is Flavohemoprotein.